We begin with the raw amino-acid sequence, 1715 residues long: Ubiquitin carboxyl-terminal hydrolase 32 (1715 aa).

EF-hand domains are found at residues I161 to G196 and P197 to V232. Residues D174, N176, D178, H180, E185, D210, D212, D214, and E221 each contribute to the Ca(2+) site. Positions Q314–I492 constitute a DUSP domain. Positions Q393–P429 are disordered. Low complexity predominate over residues G408–G419. The USP domain maps to T677–K1675. Residue C686 is the Nucleophile of the active site. 2 stretches are compositionally biased toward polar residues: residues T1103–T1126 and Y1150–H1164. Disordered regions lie at residues T1103–A1213 and D1536–L1569. Over residues D1171–N1180 the composition is skewed to acidic residues. Polar residues predominate over residues D1188–P1209. A compositionally biased stretch (basic and acidic residues) spans A1540–L1549. A compositionally biased stretch (polar residues) spans P1550–T1559. H1633 (proton acceptor) is an active-site residue.

It belongs to the peptidase C19 family. USP20/USP33 subfamily.

The enzyme catalyses Thiol-dependent hydrolysis of ester, thioester, amide, peptide and isopeptide bonds formed by the C-terminal Gly of ubiquitin (a 76-residue protein attached to proteins as an intracellular targeting signal).. Deubiquitinating enzyme that acts as an inhibitor of mitophagy probably by counteracting the action of park. Possibly functions by hydrolyzing ubiquitin attached by park on target proteins, thereby reducing park's ability to drive mitophagy. In Drosophila melanogaster (Fruit fly), this protein is Ubiquitin carboxyl-terminal hydrolase 32.